Reading from the N-terminus, the 359-residue chain is Homoserine dehydrogenase (359 aa).

4 residues coordinate NAD(+): Ala-13, Val-15, Val-16, and Ala-41. NADP(+) is bound at residue Val-16. Val-16 is a binding site for NADPH. Lys-60, Thr-93, Ser-94, and Lys-117 together coordinate NADPH. NAD(+) is bound at residue Thr-93. Thr-93 contributes to the NADP(+) binding site. Lys-117 contacts NADP(+). Residues Glu-143, Val-146, Ala-148, and Leu-150 each contribute to the Na(+) site. Residues Gly-205 and Glu-208 each coordinate NADP(+). L-homoserine is bound by residues Glu-208 and Asp-219. Lys-223 serves as the catalytic Proton donor. Lys-290 participates in a covalent cross-link: Glycyl lysine isopeptide (Lys-Gly) (interchain with G-Cter in ubiquitin). NAD(+) is bound at residue Gly-340. Gly-340 is a binding site for NADP(+). Residue Gly-340 coordinates NADPH.

Belongs to the homoserine dehydrogenase family. Homodimer. Requires a metal cation as cofactor.

It carries out the reaction L-homoserine + NADP(+) = L-aspartate 4-semialdehyde + NADPH + H(+). It catalyses the reaction L-homoserine + NAD(+) = L-aspartate 4-semialdehyde + NADH + H(+). It participates in amino-acid biosynthesis; L-methionine biosynthesis via de novo pathway; L-homoserine from L-aspartate: step 3/3. The protein operates within amino-acid biosynthesis; L-threonine biosynthesis; L-threonine from L-aspartate: step 3/5. Its function is as follows. Catalyzes the conversion of L-aspartate-beta-semialdehyde (L-Asa) to L-homoserine (L-Hse), the third step in the biosynthesis of amino acids that derive from aspartate (the aspartate family of amino acids), including methioinine and threonine, the latter of which is a precursor to isoleucine; production of homoserine leads to a branch-point in the pathway as it can either be O-phosphorylated for processing to threonine, or O-acylated for processing to methionine. The polypeptide is Homoserine dehydrogenase (HOM6) (Saccharomyces cerevisiae (strain ATCC 204508 / S288c) (Baker's yeast)).